We begin with the raw amino-acid sequence, 179 residues long: ATP synthase subunit delta (179 aa).

This sequence belongs to the ATPase delta chain family. As to quaternary structure, F-type ATPases have 2 components, F(1) - the catalytic core - and F(0) - the membrane proton channel. F(1) has five subunits: alpha(3), beta(3), gamma(1), delta(1), epsilon(1). F(0) has three main subunits: a(1), b(2) and c(10-14). The alpha and beta chains form an alternating ring which encloses part of the gamma chain. F(1) is attached to F(0) by a central stalk formed by the gamma and epsilon chains, while a peripheral stalk is formed by the delta and b chains.

The protein localises to the cell inner membrane. F(1)F(0) ATP synthase produces ATP from ADP in the presence of a proton or sodium gradient. F-type ATPases consist of two structural domains, F(1) containing the extramembraneous catalytic core and F(0) containing the membrane proton channel, linked together by a central stalk and a peripheral stalk. During catalysis, ATP synthesis in the catalytic domain of F(1) is coupled via a rotary mechanism of the central stalk subunits to proton translocation. In terms of biological role, this protein is part of the stalk that links CF(0) to CF(1). It either transmits conformational changes from CF(0) to CF(1) or is implicated in proton conduction. The chain is ATP synthase subunit delta from Paraburkholderia phytofirmans (strain DSM 17436 / LMG 22146 / PsJN) (Burkholderia phytofirmans).